The following is a 380-amino-acid chain: tRNA(Met) cytidine acetate ligase (380 aa).

Residues 7–20 (ITEYNPFHNGHLYH), glycine 100, asparagine 153, and arginine 178 each bind ATP.

Belongs to the TmcAL family.

Its subcellular location is the cytoplasm. The catalysed reaction is cytidine(34) in elongator tRNA(Met) + acetate + ATP = N(4)-acetylcytidine(34) in elongator tRNA(Met) + AMP + diphosphate. In terms of biological role, catalyzes the formation of N(4)-acetylcytidine (ac(4)C) at the wobble position of elongator tRNA(Met), using acetate and ATP as substrates. First activates an acetate ion to form acetyladenylate (Ac-AMP) and then transfers the acetyl group to tRNA to form ac(4)C34. This Staphylococcus haemolyticus (strain JCSC1435) protein is tRNA(Met) cytidine acetate ligase.